A 142-amino-acid chain; its full sequence is Putative pre-16S rRNA nuclease (142 aa).

Belongs to the YqgF nuclease family.

The protein resides in the cytoplasm. Functionally, could be a nuclease involved in processing of the 5'-end of pre-16S rRNA. This Staphylococcus haemolyticus (strain JCSC1435) protein is Putative pre-16S rRNA nuclease.